Consider the following 95-residue polypeptide: Small ribosomal subunit protein uS19 (95 aa).

This sequence belongs to the universal ribosomal protein uS19 family.

Its function is as follows. Protein S19 forms a complex with S13 that binds strongly to the 16S ribosomal RNA. This is Small ribosomal subunit protein uS19 from Thermotoga sp. (strain RQ2).